A 508-amino-acid chain; its full sequence is Bifunctional purine biosynthesis protein PurH (508 aa).

Residues 1–145 (MAKKALISVS…KNYKYVTILV (145 aa)) enclose the MGS-like domain.

Belongs to the PurH family.

The enzyme catalyses (6R)-10-formyltetrahydrofolate + 5-amino-1-(5-phospho-beta-D-ribosyl)imidazole-4-carboxamide = 5-formamido-1-(5-phospho-D-ribosyl)imidazole-4-carboxamide + (6S)-5,6,7,8-tetrahydrofolate. It catalyses the reaction IMP + H2O = 5-formamido-1-(5-phospho-D-ribosyl)imidazole-4-carboxamide. It participates in purine metabolism; IMP biosynthesis via de novo pathway; 5-formamido-1-(5-phospho-D-ribosyl)imidazole-4-carboxamide from 5-amino-1-(5-phospho-D-ribosyl)imidazole-4-carboxamide (10-formyl THF route): step 1/1. The protein operates within purine metabolism; IMP biosynthesis via de novo pathway; IMP from 5-formamido-1-(5-phospho-D-ribosyl)imidazole-4-carboxamide: step 1/1. This is Bifunctional purine biosynthesis protein PurH from Thermoanaerobacter sp. (strain X514).